The sequence spans 304 residues: Energy-coupling factor transporter ATP-binding protein EcfA2 (304 aa).

Positions 3 to 261 (IIVKNISYIY…EKFLVENKLK (259 aa)) constitute an ABC transporter domain. 40 to 47 (GSTGSGKT) is an ATP binding site.

This sequence belongs to the ABC transporter superfamily. Energy-coupling factor EcfA family. In terms of assembly, forms a stable energy-coupling factor (ECF) transporter complex composed of 2 membrane-embedded substrate-binding proteins (S component), 2 ATP-binding proteins (A component) and 2 transmembrane proteins (T component).

The protein localises to the cell membrane. In terms of biological role, ATP-binding (A) component of a common energy-coupling factor (ECF) ABC-transporter complex. Unlike classic ABC transporters this ECF transporter provides the energy necessary to transport a number of different substrates. In Mycoplasmopsis pulmonis (strain UAB CTIP) (Mycoplasma pulmonis), this protein is Energy-coupling factor transporter ATP-binding protein EcfA2.